We begin with the raw amino-acid sequence, 835 residues long: Protein translocase subunit SecA (835 aa).

ATP-binding positions include Gln85, 103–107 (GEGKT), and Asp492. The segment at 788–807 (VQGEAVHPSSDGEEAKKKPV) is disordered. Residues Cys819, Cys821, Cys830, and Cys831 each contribute to the Zn(2+) site.

Belongs to the SecA family. Monomer and homodimer. Part of the essential Sec protein translocation apparatus which comprises SecA, SecYEG and auxiliary proteins SecDF. Other proteins may also be involved. It depends on Zn(2+) as a cofactor.

It localises to the cell membrane. It is found in the cytoplasm. It carries out the reaction ATP + H2O + cellular proteinSide 1 = ADP + phosphate + cellular proteinSide 2.. Its function is as follows. Part of the Sec protein translocase complex. Interacts with the SecYEG preprotein conducting channel. Has a central role in coupling the hydrolysis of ATP to the transfer of proteins into and across the cell membrane, serving as an ATP-driven molecular motor driving the stepwise translocation of polypeptide chains across the membrane. The sequence is that of Protein translocase subunit SecA from Bacillus cereus (strain ATCC 14579 / DSM 31 / CCUG 7414 / JCM 2152 / NBRC 15305 / NCIMB 9373 / NCTC 2599 / NRRL B-3711).